The chain runs to 372 residues: tRNA-specific 2-thiouridylase MnmA (372 aa).

Residues 16 to 23 (GMSGGVDS) and Met42 each bind ATP. Residues 102-104 (NPD) are interaction with target base in tRNA. Cys107 serves as the catalytic Nucleophile. Cys107 and Cys205 form a disulfide bridge. Gly132 is an ATP binding site. Positions 155–157 (KDQ) are interaction with tRNA. The Cysteine persulfide intermediate role is filled by Cys205. Residues 317-318 (RY) form an interaction with tRNA region.

The protein belongs to the MnmA/TRMU family.

Its subcellular location is the cytoplasm. The enzyme catalyses S-sulfanyl-L-cysteinyl-[protein] + uridine(34) in tRNA + AH2 + ATP = 2-thiouridine(34) in tRNA + L-cysteinyl-[protein] + A + AMP + diphosphate + H(+). Functionally, catalyzes the 2-thiolation of uridine at the wobble position (U34) of tRNA, leading to the formation of s(2)U34. In Shewanella oneidensis (strain ATCC 700550 / JCM 31522 / CIP 106686 / LMG 19005 / NCIMB 14063 / MR-1), this protein is tRNA-specific 2-thiouridylase MnmA.